A 529-amino-acid chain; its full sequence is Bifunctional purine biosynthesis protein PurH (529 aa).

The region spanning 1 to 148 (MQQRRPIRRA…KNHKDVAIVV (148 aa)) is the MGS-like domain.

Belongs to the PurH family.

The catalysed reaction is (6R)-10-formyltetrahydrofolate + 5-amino-1-(5-phospho-beta-D-ribosyl)imidazole-4-carboxamide = 5-formamido-1-(5-phospho-D-ribosyl)imidazole-4-carboxamide + (6S)-5,6,7,8-tetrahydrofolate. It catalyses the reaction IMP + H2O = 5-formamido-1-(5-phospho-D-ribosyl)imidazole-4-carboxamide. The protein operates within purine metabolism; IMP biosynthesis via de novo pathway; 5-formamido-1-(5-phospho-D-ribosyl)imidazole-4-carboxamide from 5-amino-1-(5-phospho-D-ribosyl)imidazole-4-carboxamide (10-formyl THF route): step 1/1. It functions in the pathway purine metabolism; IMP biosynthesis via de novo pathway; IMP from 5-formamido-1-(5-phospho-D-ribosyl)imidazole-4-carboxamide: step 1/1. This is Bifunctional purine biosynthesis protein PurH from Yersinia enterocolitica serotype O:8 / biotype 1B (strain NCTC 13174 / 8081).